The primary structure comprises 971 residues: MASNNVAQFAAELKMPAGVLLEQLQAAGVQKASEDDALSETDKARLLDHLRKSHGATDGDKRKITLTRKHTSEIKQSDATGKARTIQVEVRKKRTFVKRDDVAEGADQGQAQVAEADDDAELKRREEEARREAELLEKQAQELRERQERLEREEAERRAREEAAEAERRRAEEEAATKRAAAEVAAAQQQAAAQQAAAEQEATPTQSAQDEARAAAERAAQREAAKKAEDAAREAADKARAEQEEISKRRAAAEAEARAIREMMNTPRKAVVKAVEPPKPVEPPKPAEAKGTLHKPAKPEGAQARPAVKKPAGAAAPATTQAPAGAGDRNKKPGAGKGGWQDDAAKRRGIKTRGDSSGGVDRGWRGGPKGRGRHQDSSTFQAPTEPIVREVHVPETVSVADLAHKMSIKASEVIKVMMKMGQMVTINQVLDQETAMIIVEELGHRAVAAKLDDPEALLVEGESGTDAEQLPRPPVVTVMGHVDHGKTSLLDHIRRAKVAAGEAGGITQHIGAYHVDTPRGVITFLDTPGHEAFTAMRARGAKATDIVVLVVAADDGVMPQTKEAIAHAKAGGVPIVVAINKIDKPEANPDRVKQELVAEGVVPEEYGGDSPFVPVSAKTGAGIDDLLENVLLQAEVLELKAPVEAPAKGIVIEAKLDKGKGPVATILVQSGTLNRGDIVLAGTAYGRVRAMLDENGKPTKEAGPSIPVEIQGLSEVPGAGEEVIVLPDERKAREIALFRQGKFRDVKLAKQQAAKLESMLEQMGEGEVQNLPLIIKADVQGSQEALVQSLLKLSTDEVRVQIVHSAVGGISENDVNLATASKAVIIGFNTRADAQARKLAEANGIDIRYYNIIYDAVDEVKAAMSGMLAPEKREVITGMVEVRQVFKVPKIGTVAGCMVTDGIVKRSSSVRVLRNNVVIFTGELESLKRFKDDVKEVKQGFECGMSVKNFNDVTEGDQFEVFEVTEVARTL.

Basic and acidic residues predominate over residues 48-63 (DHLRKSHGATDGDKRK). Disordered stretches follow at residues 48 to 86 (DHLR…ARTI) and 100 to 381 (DDVA…STFQ). A compositionally biased stretch (low complexity) spans 105-114 (GADQGQAQVA). A compositionally biased stretch (basic and acidic residues) spans 121–181 (ELKRREEEAR…EEEAATKRAA (61 aa)). Residues 182 to 202 (AEVAAAQQQAAAQQAAAEQEA) show a composition bias toward low complexity. The span at 210 to 261 (DEARAAAERAAQREAAKKAEDAAREAADKARAEQEEISKRRAAAEAEARAIR) shows a compositional bias: basic and acidic residues. Residues 277 to 286 (PPKPVEPPKP) show a composition bias toward pro residues. Over residues 304 to 326 (ARPAVKKPAGAAAPATTQAPAGA) the composition is skewed to low complexity. Residues 356 to 369 (SSGGVDRGWRGGPK) show a composition bias toward gly residues. The region spanning 471–640 (PRPPVVTVMG…LLQAEVLELK (170 aa)) is the tr-type G domain. Positions 480–487 (GHVDHGKT) are G1. A GTP-binding site is contributed by 480 to 487 (GHVDHGKT). The G2 stretch occupies residues 505–509 (GITQH). The interval 526–529 (DTPG) is G3. GTP-binding positions include 526–530 (DTPGH) and 580–583 (NKID). The tract at residues 580–583 (NKID) is G4. The G5 stretch occupies residues 616–618 (SAK).

Belongs to the TRAFAC class translation factor GTPase superfamily. Classic translation factor GTPase family. IF-2 subfamily.

It is found in the cytoplasm. One of the essential components for the initiation of protein synthesis. Protects formylmethionyl-tRNA from spontaneous hydrolysis and promotes its binding to the 30S ribosomal subunits. Also involved in the hydrolysis of GTP during the formation of the 70S ribosomal complex. This chain is Translation initiation factor IF-2, found in Burkholderia orbicola (strain AU 1054).